We begin with the raw amino-acid sequence, 213 residues long: MAKAVMMLPVLLSFLLLPFSSMALTQDFCVADLTCSDTPAGYPCKASVGAGDFAYHGLAAAGNTSNLIKAAVTPAFVGQFPGVNGLGISAARLDIAVGGVVPLHTHPAASELLFVTQGTVAAGFITSSSNTVYTRTLYAGDIMVFPQGLLHYQYNAGQSAAVALVAFSGPNPGLQITDYALFANNLPSAIVEKVTFLDDAQVKKLKSVLGGSG.

The N-terminal stretch at 1–23 (MAKAVMMLPVLLSFLLLPFSSMA) is a signal peptide. Cysteine 29 and cysteine 44 are disulfide-bonded. The region spanning 56–203 (HGLAAAGNTS…VTFLDDAQVK (148 aa)) is the Cupin type-1 domain. Asparagine 63 is a glycosylation site (N-linked (GlcNAc...) asparagine). Mn(2+) contacts are provided by histidine 104, histidine 106, glutamate 111, and histidine 151.

It belongs to the germin family. Oligomer (believed to be a pentamer but probably hexamer). Phosphorylated on threonine residue.

The protein localises to the secreted. Its subcellular location is the extracellular space. It is found in the apoplast. May play a role in plant defense. Probably has no oxalate oxidase activity even if the active site is conserved. The polypeptide is Germin-like protein 8-14 (GER5) (Oryza sativa subsp. japonica (Rice)).